The chain runs to 1104 residues: MPRPELPLPEGWEEARDFDGKVYYIDHRNRTTSWIDPRDRYTKPLTFADCISDELPLGWEEAYDPQVGDYFIDHNTKTTQIEDPRVQWRREQEHMLKDYLVVAQEALSAQKEIYQVKQQRLELAQQEYQQLHAVWEHKLGSQVSLVSGSSSSSKYDPEILKAEIATAKSRVNKLKREMVHLQHELQFKERGFQTLKKIDERMSDAQGGYKLDEAQAVLRETKAIKKAITCGEKEKQDLIKSLAMLKDGFRTDRGSHSDLWSSSSSLESSSFPMPKQFLDVSSQTDISGSFSTSSNNQLAEKVRLRLRYEEAKRRIANLKIQLAKLDSEAWPGVLDSERDRLILINEKEELLKEMRFISPRKWTQGEVEQLEMARRRLEKDLQAARDTQSKALTERLKLNSKRNQLVRELEEATRQVATLHSQLKSLSSSMQSLSSGSSPGSLTSSRGSLAASSLDSSTSASFTDLYYDPFEQLDSELQSKVELLFLEGATGFRPSGCITTIHEDEVAKTQKAEGGSRLQALRSLSGTPRSMTSLSPRSSLSSPSPPCSPLITDPLLTGDAFLAPLEFEDTELSTTLCELNLGGSGTQERYRLEEPGPEGKPLGQAASVAPGCGLKVACVSAAVSDESVAGDSGVYEASAQRPGTSEAAAFDSDESEAVGATRVQIALKYDEKNKQFAILIIQLSHLSALSLQQDQKVNIRVAILPCSESSTCLFRTRPLDSANTLVFNEAFWVSISYPALHQKTLRVDVCTTDRSHTEECLGGAQISLAEVCRSGERSTRWYNLLSYKYLKKQCREPQPTEAPGPDHVDAVSALLEQTAVELEKRQEGRSSSQTLEGSWTYEEEASENEAVAEEEEEGEEDVFTEKVSPEAEECPALKVDRETNTDSVAPSPTVVRPKDRRVGAPSTGPFLRGNTIIRSKTFSPGPQSQYVCRLNRSDSDSSTLSKKPPFVRNSLERRSVRMKRPSSVKSLRTERLIRTSLDLELDLQATRTWHSQLTQEISVLKELKEHLEQAKNHGEKELPQWLREDERFRLLLRMLEKKVDRGEHKSELQADKMMRAAAKDVHRLRGQSCKEPPEVQSFREKMAFFTRPRMNIPALSADDV.

WW domains are found at residues 6 to 39 (LPLPEGWEEARDFDGKVYYIDHRNRTTSWIDPRD) and 53 to 86 (DELPLGWEEAYDPQVGDYFIDHNTKTTQIEDPRV). Positions 107–193 (LSAQKEIYQV…ELQFKERGFQ (87 aa)) form a coiled coil. S141 carries the post-translational modification Phosphoserine. Disordered stretches follow at residues 429–449 (SMQSLSSGSSPGSLTSSRGSL) and 509–547 (TQKAEGGSRLQALRSLSGTPRSMTSLSPRSSLSSPSPPC). Positions 527-542 (TPRSMTSLSPRSSLSS) are enriched in low complexity. Phosphoserine is present on S535. S542 is modified (phosphoserine; by CDK1). The C2 domain occupies 659–782 (GATRVQIALK…RSGERSTRWY (124 aa)). Positions 822-949 (LEKRQEGRSS…DSSTLSKKPP (128 aa)) are disordered. An interaction with histone H3 region spans residues 836-1104 (EGSWTYEEEA…NIPALSADDV (269 aa)). Over residues 841-862 (YEEEASENEAVAEEEEEGEEDV) the composition is skewed to acidic residues. Phosphoserine is present on residues S887, S891, and S919. Residues 916 to 930 (IIRSKTFSPGPQSQY) are compositionally biased toward polar residues. T921 carries the phosphothreonine modification. A Phosphoserine; by CDK1 modification is found at S923. The residue at position 939 (S939) is a Phosphoserine. 2 interaction with PRKCZ regions span residues 945–988 (SKKP…LDLQ) and 948–967 (PPFVRNSLERRSVRMKRPSS). Phosphoserine; by PKC/PRKCZ occurs at positions 967 and 970. Residues 994–1024 (HSQLTQEISVLKELKEHLEQAKNHGEKELPQ) adopt a coiled-coil conformation. The ADDV motif motif lies at 1102 to 1104 (DDV).

This sequence belongs to the WWC family. KIBRA subfamily. Homodimer. Forms heterodimers with WWC2 and WWC3. Interacts with DDN. Interacts with DYNLL1 and histone H3. The interaction with DYNLL1 is mandatory for the recruitment and transactivation functions of ESR1 or DYNLL1 to the target chromatin and the interaction with histone H3 ensures proper regulatory interaction of WWC1-DYNLL1-ESR1 complexes with target chromatin. Interacts (via WW domains) with DDR1 (via PPxY motif) in a collagen-regulated manner. Interacts with PRKCZ (via the protein kinase domain). Forms a tripartite complex with DDR1 and PRKCZ, but predominantly in the absence of collagen. Interacts (via the ADDV motif) with PATJ (via PDZ domain 8). Interacts (via WW domains) with SYNPO (via PPxY motifs). Interacts with NF2 and SNX4. Interacts with CCDC141; retains AMPAR in the cytosol after internalization. Interacts with DLC1 and PRKCZ. Interacts (via WW domains) with LATS1 and LATS2. Phosphorylation at Ser-542 and Ser-923 by CDK1 in response to spindle damage stress regulates mitotic exit, these two sites are dephosphorylated by CDC14B. In terms of tissue distribution, mammary epithelium.

It localises to the cytoplasm. Its subcellular location is the perinuclear region. The protein resides in the nucleus. It is found in the cell projection. The protein localises to the ruffle membrane. It localises to the cytosol. Its function is as follows. Regulator of the Hippo signaling pathway, also known as the Salvador-Warts-Hippo (SWH) pathway. Enhances phosphorylation of LATS1 and YAP1 and negatively regulates cell proliferation and organ growth due to a suppression of the transcriptional activity of YAP1, the major effector of the Hippo pathway. Along with NF2 can synergistically induce the phosphorylation of LATS1 and LATS2 and function in the regulation of Hippo signaling pathway. Acts as a transcriptional coactivator of ESR1 which plays an essential role in DYNLL1-mediated ESR1 transactivation. Modulates directional migration of podocytes. May be associated with memory performance. Regulates collagen-stimulated activation of the ERK/MAPK cascade. Plays an important role in regulating AMPA-selective glutamate receptors (AMPARs) trafficking. The protein is Protein KIBRA (Wwc1) of Mus musculus (Mouse).